Consider the following 346-residue polypeptide: Upstream stimulatory factor 2 (346 aa).

2 disordered regions span residues 1–44 (MDML…PGAE) and 215–244 (APRT…NEVE). A compositionally biased stretch (low complexity) spans 11 to 20 (AASATAAAAA). Positions 226–244 (DGTRTPRDERRRAQHNEVE) are enriched in basic and acidic residues. The bHLH domain occupies 235-290 (RRRAQHNEVERRRRDKINNWIVQLSKIIPDCNADNSKTGASKGGILSKACDYIREL). Residues 307 to 328 (LQMDNELLRQQIEELKNENALL) form a leucine-zipper region.

As to quaternary structure, interacts with MAF. Efficient DNA binding requires dimerization with another bHLH protein. Binds DNA as a homodimer or a heterodimer (USF1/USF2). In vivo, the USF1/USF2A heterodimer represents over 66% of the usf binding activity whereas the USF1 and USF2A homodimers represent less than 10%. The USF1/USF2B heterodimer accounted for almost 15% in some cell. Ubiquitous.

The protein localises to the nucleus. Transcription factor that binds to a symmetrical DNA sequence (E-boxes) (5'-CACGTG-3') that is found in a variety of viral and cellular promoters. The polypeptide is Upstream stimulatory factor 2 (USF2) (Homo sapiens (Human)).